Reading from the N-terminus, the 427-residue chain is 3-phosphoshikimate 1-carboxyvinyltransferase (427 aa).

Positions 20, 21, and 25 each coordinate 3-phosphoshikimate. Lysine 20 is a binding site for phosphoenolpyruvate. The phosphoenolpyruvate site is built by glycine 92 and arginine 120. Residues serine 166, glutamine 168, aspartate 312, and lysine 339 each coordinate 3-phosphoshikimate. Phosphoenolpyruvate is bound at residue glutamine 168. Residue aspartate 312 is the Proton acceptor of the active site. Residues arginine 343 and arginine 385 each coordinate phosphoenolpyruvate.

The protein belongs to the EPSP synthase family. Monomer.

Its subcellular location is the cytoplasm. It carries out the reaction 3-phosphoshikimate + phosphoenolpyruvate = 5-O-(1-carboxyvinyl)-3-phosphoshikimate + phosphate. It participates in metabolic intermediate biosynthesis; chorismate biosynthesis; chorismate from D-erythrose 4-phosphate and phosphoenolpyruvate: step 6/7. Functionally, catalyzes the transfer of the enolpyruvyl moiety of phosphoenolpyruvate (PEP) to the 5-hydroxyl of shikimate-3-phosphate (S3P) to produce enolpyruvyl shikimate-3-phosphate and inorganic phosphate. The polypeptide is 3-phosphoshikimate 1-carboxyvinyltransferase (Streptococcus pneumoniae serotype 2 (strain D39 / NCTC 7466)).